Consider the following 278-residue polypeptide: F-box only protein 17 (278 aa).

Residues 15–62 (SLALDALPPELLVQVLSHVPPRSLVTRCRPVCRAWRDIVDGPTVWLLQ) enclose the F-box domain. In terms of domain architecture, FBA spans 99-275 (YCLRAPFGRN…VTHSSVRVRI (177 aa)).

As to quaternary structure, part of a SCF (SKP1-cullin-F-box) protein ligase complex. Interacts with SKP1 and CUL1. In terms of tissue distribution, expressed in heart, skeletal muscle, liver and kidney. Expressed at lower levels in spleen and brain.

Functionally, substrate-recognition component of the SCF (SKP1-CUL1-F-box protein)-type E3 ubiquitin ligase complex. Able to recognize and bind denatured glycoproteins, which are modified with complex-type oligosaccharides. Also recognizes sulfated glycans. Does not bind high-mannose glycoproteins. In Homo sapiens (Human), this protein is F-box only protein 17 (FBXO17).